Reading from the N-terminus, the 286-residue chain is MNAYQKTIGRAVTLSGVGVHGGAPASARLLPADADTGILFQRSDIKDSAPVCAHVSQIGATDLCTSLGAREARIDTVEHLMAAISALGIDNLVVEIEGPEVPILDGTSARFIEAVDSVGVVTQDAKRRFIRILKTVRVEAGNSWGEFRPYDGTRFEVEIDFECPLIGRQKFAHDVDEETFRKELSTARTFGFMKDVERLWAAGLALGASLDNSLVIGDDNSIVNADGLRFKDEFVRHKTLDAVGDLALAGLPFIGCFSSYRGGHRLNSEAVKALLSDETAFEIIEA.

Histidine 79, histidine 237, and aspartate 241 together coordinate Zn(2+). The Proton donor role is filled by histidine 264.

The protein belongs to the LpxC family. The cofactor is Zn(2+).

It carries out the reaction a UDP-3-O-[(3R)-3-hydroxyacyl]-N-acetyl-alpha-D-glucosamine + H2O = a UDP-3-O-[(3R)-3-hydroxyacyl]-alpha-D-glucosamine + acetate. It participates in glycolipid biosynthesis; lipid IV(A) biosynthesis; lipid IV(A) from (3R)-3-hydroxytetradecanoyl-[acyl-carrier-protein] and UDP-N-acetyl-alpha-D-glucosamine: step 2/6. In terms of biological role, catalyzes the hydrolysis of UDP-3-O-myristoyl-N-acetylglucosamine to form UDP-3-O-myristoylglucosamine and acetate, the committed step in lipid A biosynthesis. The protein is UDP-3-O-acyl-N-acetylglucosamine deacetylase of Brucella abortus (strain 2308).